A 289-amino-acid polypeptide reads, in one-letter code: ATP synthase gamma chain (289 aa).

Belongs to the ATPase gamma chain family. F-type ATPases have 2 components, CF(1) - the catalytic core - and CF(0) - the membrane proton channel. CF(1) has five subunits: alpha(3), beta(3), gamma(1), delta(1), epsilon(1). CF(0) has three main subunits: a, b and c.

The protein resides in the cell inner membrane. Its function is as follows. Produces ATP from ADP in the presence of a proton gradient across the membrane. The gamma chain is believed to be important in regulating ATPase activity and the flow of protons through the CF(0) complex. This chain is ATP synthase gamma chain, found in Herminiimonas arsenicoxydans.